The chain runs to 150 residues: MPIVDSGSVPALTAAEKATIRTAWAPVYAKYQSTGVDILIKFFTSNPAAQAFFPKFQGLTSADQLKKSMDVRWHAERIINAVNDAVVAMDDTEKMSLKLRELSGKHAKSFQVDPQYFKVLAAVIVDTVLPGDAGLEKLMSMICILLRSSY.

A Globin domain is found at 11–150 (ALTAAEKATI…MICILLRSSY (140 aa)). Residues His74 and His106 each coordinate heme b.

This sequence belongs to the globin family. In terms of assembly, monomer.

This chain is Globin-1, found in Petromyzon marinus (Sea lamprey).